Consider the following 1174-residue polypeptide: Probable DNA-directed RNA polymerase I subunit RPA2 (1174 aa).

Residues 1-16 (MSFQTLERERTFKNPP) show a composition bias toward basic and acidic residues. Residues 1 to 23 (MSFQTLERERTFKNPPKDGTSFP) are disordered. A C4-type zinc finger spans residues 1089–1118 (CRDCGSIISIMSTISMNGVGSASEVRCRSC).

This sequence belongs to the RNA polymerase beta chain family. In terms of assembly, component of the RNA polymerase I (Pol I) complex consisting of 14 subunits.

The protein resides in the nucleus. It localises to the nucleolus. It carries out the reaction RNA(n) + a ribonucleoside 5'-triphosphate = RNA(n+1) + diphosphate. Functionally, DNA-dependent RNA polymerase catalyzes the transcription of DNA into RNA using the four ribonucleoside triphosphates as substrates. Second largest core component of RNA polymerase I which synthesizes ribosomal RNA precursors. Proposed to contribute to the polymerase catalytic activity and forms the polymerase active center together with the largest subunit. Pol I is composed of mobile elements and RPA2 is part of the core element with the central large cleft and probably a clamp element that moves to open and close the cleft. In Schizosaccharomyces pombe (strain 972 / ATCC 24843) (Fission yeast), this protein is Probable DNA-directed RNA polymerase I subunit RPA2 (rpa2).